Here is a 412-residue protein sequence, read N- to C-terminus: Serine hydroxymethyltransferase 1 (412 aa).

(6S)-5,6,7,8-tetrahydrofolate-binding positions include Leu116 and 120-122 (GHL). At Lys225 the chain carries N6-(pyridoxal phosphate)lysine.

Belongs to the SHMT family. In terms of assembly, homodimer. The cofactor is pyridoxal 5'-phosphate.

The protein localises to the cytoplasm. The catalysed reaction is (6R)-5,10-methylene-5,6,7,8-tetrahydrofolate + glycine + H2O = (6S)-5,6,7,8-tetrahydrofolate + L-serine. It functions in the pathway one-carbon metabolism; tetrahydrofolate interconversion. Its pathway is amino-acid biosynthesis; glycine biosynthesis; glycine from L-serine: step 1/1. Its function is as follows. Catalyzes the reversible interconversion of serine and glycine with tetrahydrofolate (THF) serving as the one-carbon carrier. This reaction serves as the major source of one-carbon groups required for the biosynthesis of purines, thymidylate, methionine, and other important biomolecules. Also exhibits THF-independent aldolase activity toward beta-hydroxyamino acids, producing glycine and aldehydes, via a retro-aldol mechanism. The sequence is that of Serine hydroxymethyltransferase 1 from Pseudomonas fluorescens (strain Pf0-1).